The primary structure comprises 216 residues: UPF0598 protein C8orf82 (216 aa).

This sequence belongs to the UPF0598 family.

The protein is UPF0598 protein C8orf82 (C8orf82) of Homo sapiens (Human).